The chain runs to 423 residues: COP9 signalosome complex subunit 3 (423 aa).

The residue at position 2 (A2) is an N-acetylalanine. Residues 197 to 365 form the PCI domain; it reads NFERALYFYE…GMVSFHDNPE (169 aa). The interval 402–423 is disordered; that stretch reads QFVQKSMGSQEDDSGNKPSSYS. Phosphoserine occurs at positions 407, 410, and 423.

The protein belongs to the CSN3 family. Component of the CSN complex, composed of COPS1/GPS1, COPS2, COPS3, COPS4, COPS5, COPS6, COPS7 (COPS7A or COPS7B), COPS8 and COPS9 isoform 1. In the complex, it probably interacts directly with COPS1, COPS4, COPS8 and COPS9 isoform 1. Interacts with CK2 and PKD. Interacts with the translation initiation factor EIF3S6 and IKBKG. Interacts with ERCC6. As to expression, widely expressed. Expressed at high level in heart and skeletal muscle.

It is found in the cytoplasm. It localises to the nucleus. Component of the COP9 signalosome complex (CSN), a complex involved in various cellular and developmental processes. The CSN complex is an essential regulator of the ubiquitin (Ubl) conjugation pathway by mediating the deneddylation of the cullin subunits of SCF-type E3 ligase complexes, leading to decrease the Ubl ligase activity of SCF-type complexes such as SCF, CSA or DDB2. The complex is also involved in phosphorylation of p53/TP53, c-jun/JUN, IkappaBalpha/NFKBIA, ITPK1 and IRF8/ICSBP, possibly via its association with CK2 and PKD kinases. CSN-dependent phosphorylation of TP53 and JUN promotes and protects degradation by the Ubl system, respectively. This is COP9 signalosome complex subunit 3 (COPS3) from Homo sapiens (Human).